A 177-amino-acid chain; its full sequence is Large ribosomal subunit protein uL6 (177 aa).

It belongs to the universal ribosomal protein uL6 family. Part of the 50S ribosomal subunit.

In terms of biological role, this protein binds to the 23S rRNA, and is important in its secondary structure. It is located near the subunit interface in the base of the L7/L12 stalk, and near the tRNA binding site of the peptidyltransferase center. This Haemophilus influenzae (strain 86-028NP) protein is Large ribosomal subunit protein uL6.